Here is a 131-residue protein sequence, read N- to C-terminus: Small ribosomal subunit protein uS8 (131 aa).

It belongs to the universal ribosomal protein uS8 family. In terms of assembly, part of the 30S ribosomal subunit. Contacts proteins S5 and S12.

One of the primary rRNA binding proteins, it binds directly to 16S rRNA central domain where it helps coordinate assembly of the platform of the 30S subunit. The chain is Small ribosomal subunit protein uS8 from Azoarcus sp. (strain BH72).